Reading from the N-terminus, the 383-residue chain is MKNKLPPFIEIYRALIATPSISATEEALDQSNADLITLLADWFKDLGFNVEVQPVPGTRNKFNMLASIGQGAGGLLLAGHTDTVPFDDGRWTRDPFTLTEHDGKLYGLGTADMKGFFAFILDALRDVDVTKLKKPLYILATADEETSMAGARYFAETTALRPDCAIIGEPTSLQPVRAHKGHISNAIRIQGQSGHSSDPARGVNAIELMHDAIGHILQLRDNLKERYHYEAFTVPYPTLNLGHIHGGDASNRICACCELHMDIRPLPGMTLNELNGLLNDALAPVSERWPGRLTVDELHPPIPGYECPPNHQLVEVVEKLLGAKTEVVNYCTEAPFIQTLCPTLVLGPGSINQAHQPDEYLETRFIKPTRELIIQVIHHFCWH.

H80 lines the Zn(2+) pocket. D82 is a catalytic residue. D112 serves as a coordination point for Zn(2+). E144 is a catalytic residue. Residues E145, E169, and H355 each contribute to the Zn(2+) site.

Belongs to the peptidase M20A family. ArgE subfamily. Homodimer. It depends on Zn(2+) as a cofactor. Co(2+) is required as a cofactor. The cofactor is glutathione.

It is found in the cytoplasm. It carries out the reaction N(2)-acetyl-L-ornithine + H2O = L-ornithine + acetate. The protein operates within amino-acid biosynthesis; L-arginine biosynthesis; L-ornithine from N(2)-acetyl-L-ornithine (linear): step 1/1. Catalyzes the hydrolysis of the amide bond of N(2)-acetylated L-amino acids. Cleaves the acetyl group from N-acetyl-L-ornithine to form L-ornithine, an intermediate in L-arginine biosynthesis pathway, and a branchpoint in the synthesis of polyamines. This is Acetylornithine deacetylase from Escherichia coli O9:H4 (strain HS).